A 427-amino-acid polypeptide reads, in one-letter code: 3-phosphoshikimate 1-carboxyvinyltransferase (427 aa).

Positions 23, 24, and 28 each coordinate 3-phosphoshikimate. Residue lysine 23 participates in phosphoenolpyruvate binding. The phosphoenolpyruvate site is built by glycine 97 and arginine 125. 3-phosphoshikimate-binding residues include serine 170, serine 171, glutamine 172, serine 198, aspartate 314, asparagine 337, and lysine 341. Glutamine 172 is a binding site for phosphoenolpyruvate. Catalysis depends on aspartate 314, which acts as the Proton acceptor. Phosphoenolpyruvate is bound by residues arginine 345, arginine 387, and lysine 412.

This sequence belongs to the EPSP synthase family. As to quaternary structure, monomer.

The protein resides in the cytoplasm. It catalyses the reaction 3-phosphoshikimate + phosphoenolpyruvate = 5-O-(1-carboxyvinyl)-3-phosphoshikimate + phosphate. Its pathway is metabolic intermediate biosynthesis; chorismate biosynthesis; chorismate from D-erythrose 4-phosphate and phosphoenolpyruvate: step 6/7. Functionally, catalyzes the transfer of the enolpyruvyl moiety of phosphoenolpyruvate (PEP) to the 5-hydroxyl of shikimate-3-phosphate (S3P) to produce enolpyruvyl shikimate-3-phosphate and inorganic phosphate. This chain is 3-phosphoshikimate 1-carboxyvinyltransferase, found in Buchnera aphidicola subsp. Baizongia pistaciae (strain Bp).